The chain runs to 460 residues: MASPSRSGVFQAETDARLEAYAESISFDSRLYEHDIRGSIAHANMLREVGLLTEDEFKLIRDTLETIRGELDRGELPMRFELEDIHMHVEQALIDRIGDTGRKLHTARSRNDQVSTDTRMWIRQSLDEIDALLVDLQSAFLSRCENDFDIILPAYTHLQRAQPVLAPHYWLAYIEKLERDRQRIADCRKRVNQCSLGIAAVAGTTLPIDRQHTASALDFEGITANSLDTSSDRDFVVESTFVMSLIASHLSGWAEEWILWSTVEFDFIQIPQAFCTGSSIMPQKVNPDTLELTRGKSARVMGALQTLMLLIKNLPLAYNRDLQEDKPPLFDAFDTTRAMLELAAPIVRGAELKRESIAARIEKGYLDATTLMEWMIARGMPQRTAHHLVGAIVSEAMQQGVTLSDLPLETYQKLSDQIDESVYEVLGTSNAIAAFRSEGSTAPARVREQIKQWTSRLENA.

Belongs to the lyase 1 family. Argininosuccinate lyase subfamily.

It is found in the cytoplasm. It carries out the reaction 2-(N(omega)-L-arginino)succinate = fumarate + L-arginine. It functions in the pathway amino-acid biosynthesis; L-arginine biosynthesis; L-arginine from L-ornithine and carbamoyl phosphate: step 3/3. The chain is Argininosuccinate lyase from Rhodopirellula baltica (strain DSM 10527 / NCIMB 13988 / SH1).